Consider the following 210-residue polypeptide: Riboflavin kinase (210 aa).

Residues 1–81 are H-T-H motif-like; that stretch reads MECRERRLAA…DLLRYFNIAS (81 aa). Residues 82 to 210 form a riboflavin kinase region; it reads IRLVGRVVSG…GDVVEVEVLL (129 aa). 91-96 is a binding site for CDP; sequence GLGEGA. Mg(2+) is bound by residues threonine 120 and asparagine 122. Residues threonine 177 and glutamate 185 each contribute to the FMN site. 190 to 193 lines the CDP pocket; the sequence is VKLR.

It belongs to the archaeal riboflavin kinase family. The cofactor is Mg(2+).

It carries out the reaction riboflavin + CTP = CDP + FMN + H(+). The protein operates within cofactor biosynthesis; FMN biosynthesis; FMN from riboflavin (CTP route): step 1/1. Its function is as follows. Catalyzes the CTP-dependent phosphorylation of riboflavin (vitamin B2) to form flavin mononucleotide (FMN). The sequence is that of Riboflavin kinase (ribK) from Pyrobaculum arsenaticum (strain DSM 13514 / JCM 11321 / PZ6).